The following is a 170-amino-acid chain: Cyclic pyranopterin monophosphate synthase (170 aa).

Residues 75–77 and 115–116 contribute to the substrate site; these read MCH and ME. Aspartate 130 is a catalytic residue.

It belongs to the MoaC family. In terms of assembly, homohexamer; trimer of dimers.

It catalyses the reaction (8S)-3',8-cyclo-7,8-dihydroguanosine 5'-triphosphate = cyclic pyranopterin phosphate + diphosphate. It participates in cofactor biosynthesis; molybdopterin biosynthesis. In terms of biological role, catalyzes the conversion of (8S)-3',8-cyclo-7,8-dihydroguanosine 5'-triphosphate to cyclic pyranopterin monophosphate (cPMP). This is Cyclic pyranopterin monophosphate synthase from Bacillus velezensis (strain DSM 23117 / BGSC 10A6 / LMG 26770 / FZB42) (Bacillus amyloliquefaciens subsp. plantarum).